Reading from the N-terminus, the 471-residue chain is UDP-glycosyltransferase 71A15 (471 aa).

UDP-alpha-D-glucose contacts are provided by residues serine 282, 348–349 (WA), 366–374 (HCGWNSTLE), and 388–391 (YAEQ).

This sequence belongs to the UDP-glycosyltransferase family.

Functionally, glycosyltransferase that possesses chalcone and flavonol 2'-O-glycosyltransferase activity. Converts phloretin to phlorizin (phloretin 2'-O-glucoside), a potent antioxidant. Possesses glycosyltransferase activity toward, naringenin, naringenin chalcone, eriodictyol, eriodictyol chalcone, apigenin, luteolin, kaempferol, quercetin, isoliquiritigenin, butein and caffeic acid. Can convert phloretin to phloretin 4'-O-glucoside and phloretin 4-O-glucoside. This chain is UDP-glycosyltransferase 71A15, found in Malus domestica (Apple).